A 123-amino-acid polypeptide reads, in one-letter code: F-box protein PP2-B3 (123 aa).

The F-box domain occupies 10–56 (PSPFDGLPENCISNIISFTTPRDACFAASVSKAFESAVQSDSVWEKF).

This chain is F-box protein PP2-B3 (PP2B3), found in Arabidopsis thaliana (Mouse-ear cress).